The following is a 336-amino-acid chain: MLKSRGIIKGINLGGWMSQCDYSRERLDNFVKENDIKQIADWGFDHVRLPIDYNIVQNNDGSVIEDGYNRIDKVVELCRKYGLKLVIDLHKTAGFSFDFGEPESGFFDNKEYQERFYILWEEIARRYGHDTDNIVFELLNEVTDEAFIGKWNEISDICIGRIRKIAPEVIILLGSYHNNAADTVQFLNAPHDDRVVYNFHCYEPLKFTHQGATWTPDIIPGERMKFEDSETSEAYFEELFSTAISTAEKYGTTLYCGEYGVIDVVSAEDSLKWFKVINKVFSKHGISRECGITRKWTSAFPTASTTATVRDTEVSVIKTRKAHNCCTLTEVFTRVY.

The active-site Proton donor is the Glu-141.

The protein belongs to the glycosyl hydrolase 5 (cellulase A) family.

The protein localises to the secreted. Its function is as follows. Crystalline cellulose degradation. In Ruminococcus flavefaciens, this protein is Cellodextrinase A (celA).